A 138-amino-acid polypeptide reads, in one-letter code: Small ribosomal subunit protein uS11c (138 aa).

The protein belongs to the universal ribosomal protein uS11 family. As to quaternary structure, part of the 30S ribosomal subunit.

The protein localises to the plastid. The chain is Small ribosomal subunit protein uS11c from Cuscuta gronovii (Common dodder).